Consider the following 1356-residue polypeptide: Serine/threonine-protein kinase PSK1 (1356 aa).

Ser10 is modified (phosphoserine). The interval 20-115 is disordered; that stretch reads KHAITHKGTS…SVDSTVSSPL (96 aa). Composition is skewed to polar residues over residues 26–37 and 54–64; these read KGTSSSVASLQT and YDTSLSDVSTP. Positions 99-115 are enriched in low complexity; the sequence is LPSTASSSVDSTVSSPL. 5 positions are modified to phosphoserine: Ser192, Ser202, Ser255, Ser286, and Ser327. In terms of domain architecture, PAS 1 spans 450–518; the sequence is RTFTSTKNSA…VLHKLLSTEG (69 aa). Residues 592–608 show a composition bias toward low complexity; the sequence is PTLSSSSTLSLPKMASS. Disordered stretches follow at residues 592-612 and 627-660; these read PTLS…PTGS and YTKP…PVRS. A PAS 2 domain is found at 738–807; it reads LKLKIHSLPY…FINDKYPALD (70 aa). At Ser926 the chain carries Phosphoserine. Positions 948–972 are disordered; that stretch reads DSRAHSQSTLSEQEQVPLENDKDSG. Over residues 952–961 the composition is skewed to polar residues; that stretch reads HSQSTLSEQE. Phosphoserine occurs at positions 1018, 1023, 1035, and 1055. Residues 1021-1032 show a composition bias toward polar residues; the sequence is TESLADSKSSGK. The disordered stretch occupies residues 1021–1066; that stretch reads TESLADSKSSGKGLSPLEEEKLIDENATENGLAGSPKDEDGIIMTN. Thr1079 is subject to Phosphothreonine. The Protein kinase domain occupies 1096–1354; the sequence is FVSLQKMGEG…IDDINNDKWL (259 aa). ATP-binding positions include 1102–1110 and Lys1125; that span reads MGEGAYGKV. The active-site Proton acceptor is Asp1230.

The protein belongs to the protein kinase superfamily. Ser/Thr protein kinase family.

Its subcellular location is the cytoplasm. The catalysed reaction is L-seryl-[protein] + ATP = O-phospho-L-seryl-[protein] + ADP + H(+). It catalyses the reaction L-threonyl-[protein] + ATP = O-phospho-L-threonyl-[protein] + ADP + H(+). Its function is as follows. Serine/threonine-protein kinase involved in the control of sugar metabolism and translation. Phosphorylates UGP1, which is required for normal glycogen and beta-(1,6)-glucan synthesis. This phosphorylation shifts glucose partitioning toward cell wall glucan synthesis at the expense of glycogen synthesis. The polypeptide is Serine/threonine-protein kinase PSK1 (PSK1) (Saccharomyces cerevisiae (strain ATCC 204508 / S288c) (Baker's yeast)).